Reading from the N-terminus, the 426-residue chain is Serine hydroxymethyltransferase (426 aa).

(6S)-5,6,7,8-tetrahydrofolate-binding positions include leucine 115 and 119–121 (GHI). N6-(pyridoxal phosphate)lysine is present on lysine 225.

The protein belongs to the SHMT family. In terms of assembly, homodimer. The cofactor is pyridoxal 5'-phosphate.

It is found in the cytoplasm. The protein operates within amino-acid biosynthesis; glycine biosynthesis; glycine from L-serine: step 1/1. Catalyzes the reversible interconversion of serine and glycine with a modified folate serving as the one-carbon carrier. Also exhibits a pteridine-independent aldolase activity toward beta-hydroxyamino acids, producing glycine and aldehydes, via a retro-aldol mechanism. The polypeptide is Serine hydroxymethyltransferase (Thermoplasma volcanium (strain ATCC 51530 / DSM 4299 / JCM 9571 / NBRC 15438 / GSS1)).